The following is a 116-amino-acid chain: uncharacterized protein (116 aa).

The first 15 residues, M1–A15, serve as a signal peptide directing secretion.

This is an uncharacterized protein from Haemophilus influenzae (strain ATCC 51907 / DSM 11121 / KW20 / Rd).